The sequence spans 734 residues: Phosphoribosylformylglycinamidine synthase subunit PurL (734 aa).

The active site involves histidine 49. ATP contacts are provided by tyrosine 52 and lysine 91. Glutamate 93 contacts Mg(2+). Substrate-binding positions include 94–97 and arginine 116; that span reads SHNH. Histidine 95 functions as the Proton acceptor in the catalytic mechanism. Aspartate 117 contributes to the Mg(2+) binding site. Glutamine 240 contacts substrate. Aspartate 268 provides a ligand contact to Mg(2+). 312-314 contacts substrate; it reads ESQ. ATP is bound by residues aspartate 491 and glycine 528. A Mg(2+)-binding site is contributed by asparagine 529. Serine 531 provides a ligand contact to substrate.

It belongs to the FGAMS family. Monomer. Part of the FGAM synthase complex composed of 1 PurL, 1 PurQ and 2 PurS subunits.

It localises to the cytoplasm. The enzyme catalyses N(2)-formyl-N(1)-(5-phospho-beta-D-ribosyl)glycinamide + L-glutamine + ATP + H2O = 2-formamido-N(1)-(5-O-phospho-beta-D-ribosyl)acetamidine + L-glutamate + ADP + phosphate + H(+). It functions in the pathway purine metabolism; IMP biosynthesis via de novo pathway; 5-amino-1-(5-phospho-D-ribosyl)imidazole from N(2)-formyl-N(1)-(5-phospho-D-ribosyl)glycinamide: step 1/2. In terms of biological role, part of the phosphoribosylformylglycinamidine synthase complex involved in the purines biosynthetic pathway. Catalyzes the ATP-dependent conversion of formylglycinamide ribonucleotide (FGAR) and glutamine to yield formylglycinamidine ribonucleotide (FGAM) and glutamate. The FGAM synthase complex is composed of three subunits. PurQ produces an ammonia molecule by converting glutamine to glutamate. PurL transfers the ammonia molecule to FGAR to form FGAM in an ATP-dependent manner. PurS interacts with PurQ and PurL and is thought to assist in the transfer of the ammonia molecule from PurQ to PurL. The protein is Phosphoribosylformylglycinamidine synthase subunit PurL of Zymomonas mobilis subsp. mobilis (strain ATCC 31821 / ZM4 / CP4).